The following is a 356-amino-acid chain: Tyrosine recombinase XerS (356 aa).

The Core-binding (CB) domain maps to 16–121 (IMPWYVLDYY…ALSSLYKYLT (106 aa)). One can recognise a Tyr recombinase domain in the interval 169–354 (AFLDYVDKEY…VNDEQKNALD (186 aa)). Active-site residues include R210, K234, H306, R309, and H332. The O-(3'-phospho-DNA)-tyrosine intermediate role is filled by Y341.

The protein belongs to the 'phage' integrase family. XerS subfamily.

It is found in the cytoplasm. Its activity is regulated as follows. FtsK is required for recombination. Site-specific tyrosine recombinase, which acts by catalyzing the cutting and rejoining of the recombining DNA molecules. Essential to convert dimers of the bacterial chromosome into monomers to permit their segregation at cell division. The polypeptide is Tyrosine recombinase XerS (Streptococcus pyogenes serotype M6 (strain ATCC BAA-946 / MGAS10394)).